The sequence spans 445 residues: Argininosuccinate lyase (445 aa).

This sequence belongs to the lyase 1 family. Argininosuccinate lyase subfamily.

It is found in the cytoplasm. It catalyses the reaction 2-(N(omega)-L-arginino)succinate = fumarate + L-arginine. Its pathway is amino-acid biosynthesis; L-arginine biosynthesis; L-arginine from L-ornithine and carbamoyl phosphate: step 3/3. This Xylella fastidiosa (strain 9a5c) protein is Argininosuccinate lyase.